The following is a 649-amino-acid chain: Protein mitoshell (649 aa).

Over residues Leu167–Pro176 the composition is skewed to basic and acidic residues. Disordered regions lie at residues Leu167 to Ala193, His389 to Ser414, and Ala485 to Tyr512. The span at Glu177–Ser191 shows a compositional bias: low complexity. Composition is skewed to polar residues over residues Ala393–Ser414 and Ala485–Ser503.

Its function is as follows. Required for male meiotic cytokinesis through its involvement in the regulation of mitochondrial aggregation and fusion, astral spindle assembly and contractile ring formation. The chain is Protein mitoshell from Drosophila melanogaster (Fruit fly).